Reading from the N-terminus, the 251-residue chain is 3-deoxy-manno-octulosonate cytidylyltransferase (251 aa).

The protein belongs to the KdsB family.

Its subcellular location is the cytoplasm. The enzyme catalyses 3-deoxy-alpha-D-manno-oct-2-ulosonate + CTP = CMP-3-deoxy-beta-D-manno-octulosonate + diphosphate. It participates in nucleotide-sugar biosynthesis; CMP-3-deoxy-D-manno-octulosonate biosynthesis; CMP-3-deoxy-D-manno-octulosonate from 3-deoxy-D-manno-octulosonate and CTP: step 1/1. It functions in the pathway bacterial outer membrane biogenesis; lipopolysaccharide biosynthesis. In terms of biological role, activates KDO (a required 8-carbon sugar) for incorporation into bacterial lipopolysaccharide in Gram-negative bacteria. The protein is 3-deoxy-manno-octulosonate cytidylyltransferase of Alcanivorax borkumensis (strain ATCC 700651 / DSM 11573 / NCIMB 13689 / SK2).